A 247-amino-acid polypeptide reads, in one-letter code: tRNA pseudouridine synthase A (247 aa).

The Nucleophile role is filled by D53. Y111 provides a ligand contact to substrate.

The protein belongs to the tRNA pseudouridine synthase TruA family. As to quaternary structure, homodimer.

It carries out the reaction uridine(38/39/40) in tRNA = pseudouridine(38/39/40) in tRNA. Formation of pseudouridine at positions 38, 39 and 40 in the anticodon stem and loop of transfer RNAs. This Bacillus velezensis (strain DSM 23117 / BGSC 10A6 / LMG 26770 / FZB42) (Bacillus amyloliquefaciens subsp. plantarum) protein is tRNA pseudouridine synthase A.